The chain runs to 175 residues: Bcl-2-related protein A1 (175 aa).

Belongs to the Bcl-2 family. In terms of assembly, interacts directly with BCL2L11/BIM, BAK1, BID, BMF and BBC3. Interacts directly with PMAIP1. Interacts with BOP. Interacts with ING4. Interacts with UBQLN4.

Its subcellular location is the cytoplasm. Functionally, retards apoptosis induced by IL-3 deprivation. May function in the response of hemopoietic cells to external signals and in maintaining endothelial survival during infection. Can inhibit apoptosis induced by serum starvation in the mammary epithelial cell line HC11. The chain is Bcl-2-related protein A1 (BCL2A1) from Bos taurus (Bovine).